The sequence spans 742 residues: Phosphoribosylformylglycinamidine synthase subunit PurL (742 aa).

His50 is a catalytic residue. 2 residues coordinate ATP: Tyr53 and Lys92. Glu94 provides a ligand contact to Mg(2+). Residues 95 to 98 (SHNH) and Arg117 contribute to the substrate site. His96 acts as the Proton acceptor in catalysis. Asp118 contacts Mg(2+). Gln241 contributes to the substrate binding site. Asp269 serves as a coordination point for Mg(2+). 313-315 (ESQ) contributes to the substrate binding site. Positions 494 and 531 each coordinate ATP. Asn532 is a binding site for Mg(2+). Ser534 is a substrate binding site.

It belongs to the FGAMS family. In terms of assembly, monomer. Part of the FGAM synthase complex composed of 1 PurL, 1 PurQ and 2 PurS subunits.

Its subcellular location is the cytoplasm. The enzyme catalyses N(2)-formyl-N(1)-(5-phospho-beta-D-ribosyl)glycinamide + L-glutamine + ATP + H2O = 2-formamido-N(1)-(5-O-phospho-beta-D-ribosyl)acetamidine + L-glutamate + ADP + phosphate + H(+). Its pathway is purine metabolism; IMP biosynthesis via de novo pathway; 5-amino-1-(5-phospho-D-ribosyl)imidazole from N(2)-formyl-N(1)-(5-phospho-D-ribosyl)glycinamide: step 1/2. In terms of biological role, part of the phosphoribosylformylglycinamidine synthase complex involved in the purines biosynthetic pathway. Catalyzes the ATP-dependent conversion of formylglycinamide ribonucleotide (FGAR) and glutamine to yield formylglycinamidine ribonucleotide (FGAM) and glutamate. The FGAM synthase complex is composed of three subunits. PurQ produces an ammonia molecule by converting glutamine to glutamate. PurL transfers the ammonia molecule to FGAR to form FGAM in an ATP-dependent manner. PurS interacts with PurQ and PurL and is thought to assist in the transfer of the ammonia molecule from PurQ to PurL. The sequence is that of Phosphoribosylformylglycinamidine synthase subunit PurL from Sinorhizobium fredii (strain NBRC 101917 / NGR234).